The sequence spans 245 residues: 1-(5-phosphoribosyl)-5-[(5-phosphoribosylamino)methylideneamino] imidazole-4-carboxamide isomerase (245 aa).

Residue aspartate 7 is the Proton acceptor of the active site. The active-site Proton donor is aspartate 129.

This sequence belongs to the HisA/HisF family.

Its subcellular location is the cytoplasm. It catalyses the reaction 1-(5-phospho-beta-D-ribosyl)-5-[(5-phospho-beta-D-ribosylamino)methylideneamino]imidazole-4-carboxamide = 5-[(5-phospho-1-deoxy-D-ribulos-1-ylimino)methylamino]-1-(5-phospho-beta-D-ribosyl)imidazole-4-carboxamide. It participates in amino-acid biosynthesis; L-histidine biosynthesis; L-histidine from 5-phospho-alpha-D-ribose 1-diphosphate: step 4/9. The polypeptide is 1-(5-phosphoribosyl)-5-[(5-phosphoribosylamino)methylideneamino] imidazole-4-carboxamide isomerase (Enterobacter sp. (strain 638)).